Here is a 249-residue protein sequence, read N- to C-terminus: Putative TrmH family tRNA/rRNA methyltransferase (249 aa).

Residues G196, I216, and L225 each coordinate S-adenosyl-L-methionine.

This sequence belongs to the class IV-like SAM-binding methyltransferase superfamily. RNA methyltransferase TrmH family.

The sequence is that of Putative TrmH family tRNA/rRNA methyltransferase from Staphylococcus haemolyticus (strain JCSC1435).